Here is a 178-residue protein sequence, read N- to C-terminus: UPF0228 protein MM_0401 (178 aa).

The protein belongs to the UPF0228 family.

The polypeptide is UPF0228 protein MM_0401 (Methanosarcina mazei (strain ATCC BAA-159 / DSM 3647 / Goe1 / Go1 / JCM 11833 / OCM 88) (Methanosarcina frisia)).